A 398-amino-acid chain; its full sequence is uncharacterized protein (398 aa).

The tract at residues 313 to 398 (KTIKSSGSKT…TSKSIKYYEV (86 aa)) is disordered. Low complexity-rich tracts occupy residues 314 to 333 (TIKS…TNKS) and 343 to 398 (GSKT…YYEV).

This is an uncharacterized protein from Acanthamoeba polyphaga mimivirus (APMV).